The sequence spans 111 residues: Large ribosomal subunit protein uL23 (111 aa).

This sequence belongs to the universal ribosomal protein uL23 family. In terms of assembly, part of the 50S ribosomal subunit. Contacts protein L29, and trigger factor when it is bound to the ribosome.

Functionally, one of the early assembly proteins it binds 23S rRNA. One of the proteins that surrounds the polypeptide exit tunnel on the outside of the ribosome. Forms the main docking site for trigger factor binding to the ribosome. This is Large ribosomal subunit protein uL23 from Chlamydia caviae (strain ATCC VR-813 / DSM 19441 / 03DC25 / GPIC) (Chlamydophila caviae).